The primary structure comprises 207 residues: High frequency lysogenization protein HflD homolog (207 aa).

Belongs to the HflD family.

Its subcellular location is the cytoplasm. It is found in the cell inner membrane. The chain is High frequency lysogenization protein HflD homolog from Azotobacter vinelandii (strain DJ / ATCC BAA-1303).